The sequence spans 291 residues: Putative butyrophilin-like protein 10 pseudogene (291 aa).

Positions 1–26 (MAVTCDPEAFLSICFVTLVFLQLPLA) are cleaved as a signal peptide. The Ig-like V-type domain occupies 27–146 (SIWKADFDVT…GEATVQVQVA (120 aa)). Residues 27–254 (SIWKADFDVT…RSSQFTAWKA (228 aa)) are Extracellular-facing. Cys-54 and Cys-128 are oxidised to a cystine. Asn-59 is a glycosylation site (N-linked (GlcNAc...) asparagine). The helical transmembrane segment at 255 to 275 (ALPLILVAMGLVIAGGICIFW) threads the bilayer. Residues 276–291 (KRQREKNKASLEEERE) lie on the Cytoplasmic side of the membrane.

Belongs to the immunoglobulin superfamily. BTN/MOG family.

The protein resides in the membrane. This is Putative butyrophilin-like protein 10 pseudogene from Homo sapiens (Human).